The primary structure comprises 558 residues: Aurovertin biosynthesis cluster transcription factor aurF (558 aa).

This sequence belongs to the POU transcription factor family. Class-3 subfamily.

Its subcellular location is the nucleus. Functionally, transcription factor that regulates the expression of the gene cluster that mediates the biosynthesis of aurovertins, fungal polyketides that exhibit potent inhibition of adenosine triphosphate synthase. This chain is Aurovertin biosynthesis cluster transcription factor aurF, found in Calcarisporium arbuscula (Dendryphion arbuscula).